Reading from the N-terminus, the 41-residue chain is Antifungal peptide 2 (41 aa).

Gln-1 carries the pyrrolidone carboxylic acid modification. 5 disulfide bridges follow: Cys-3–Cys-17, Cys-7–Cys-37, Cys-11–Cys-23, Cys-16–Cys-30, and Cys-35–Cys-39. The Chitin-binding type-1 domain occupies 4 to 41 (ASRCPRPCNAGLCCSIYGYCGSGAAYCGAGNCRCQCRG).

As to quaternary structure, monomer.

In terms of biological role, has antifungal activity against P.infestans, A.lycopersici, V.dahliae, G.zeae, A.nicotianae, F.moniliforme, F.oxysporum and C.gossypii. The chain is Antifungal peptide 2 from Eucommia ulmoides (Hardy rubber tree).